The following is a 103-amino-acid chain: Small ribosomal subunit protein uS10 (103 aa).

It belongs to the universal ribosomal protein uS10 family. Part of the 30S ribosomal subunit.

In terms of biological role, involved in the binding of tRNA to the ribosomes. The sequence is that of Small ribosomal subunit protein uS10 from Neisseria meningitidis serogroup C / serotype 2a (strain ATCC 700532 / DSM 15464 / FAM18).